The following is a 784-amino-acid chain: Lon protease (784 aa).

Residues 11–204 (IPVLPLRDVV…YLMAMMESEI (194 aa)) enclose the Lon N-terminal domain. 356 to 363 (GPPGVGKT) contributes to the ATP binding site. One can recognise a Lon proteolytic domain in the interval 592 to 773 (ENRVGQVTGL…EEVLALALQN (182 aa)). Catalysis depends on residues serine 679 and lysine 722.

The protein belongs to the peptidase S16 family. As to quaternary structure, homohexamer. Organized in a ring with a central cavity.

Its subcellular location is the cytoplasm. It carries out the reaction Hydrolysis of proteins in presence of ATP.. Functionally, ATP-dependent serine protease that mediates the selective degradation of mutant and abnormal proteins as well as certain short-lived regulatory proteins. Required for cellular homeostasis and for survival from DNA damage and developmental changes induced by stress. Degrades polypeptides processively to yield small peptide fragments that are 5 to 10 amino acids long. Binds to DNA in a double-stranded, site-specific manner. The sequence is that of Lon protease from Erwinia amylovora (Fire blight bacteria).